Consider the following 373-residue polypeptide: Protein-glutamate methylesterase/protein-glutamine glutaminase 1 (373 aa).

The 118-residue stretch at 16 to 133 folds into the Response regulatory domain; sequence RVVVVDDSAL…ASGLTELSDQ (118 aa). Aspartate 67 is modified (4-aspartylphosphate). The CheB-type methylesterase domain maps to 175–367; the sequence is RVSTEKLICI…PALIAKLSSA (193 aa). Active-site residues include serine 187, histidine 213, and aspartate 309.

Belongs to the CheB family. Post-translationally, phosphorylated by CheA. Phosphorylation of the N-terminal regulatory domain activates the methylesterase activity.

The protein resides in the cytoplasm. The enzyme catalyses [protein]-L-glutamate 5-O-methyl ester + H2O = L-glutamyl-[protein] + methanol + H(+). It catalyses the reaction L-glutaminyl-[protein] + H2O = L-glutamyl-[protein] + NH4(+). Functionally, involved in chemotaxis. Part of a chemotaxis signal transduction system that modulates chemotaxis in response to various stimuli. Catalyzes the demethylation of specific methylglutamate residues introduced into the chemoreceptors (methyl-accepting chemotaxis proteins or MCP) by CheR. Also mediates the irreversible deamidation of specific glutamine residues to glutamic acid. The sequence is that of Protein-glutamate methylesterase/protein-glutamine glutaminase 1 from Albidiferax ferrireducens (strain ATCC BAA-621 / DSM 15236 / T118) (Rhodoferax ferrireducens).